The primary structure comprises 21 residues: thr operon leader peptide (21 aa).

The protein belongs to the thr operon leader peptide family.

This protein is involved in control of the biosynthesis of threonine. In Salmonella choleraesuis (strain SC-B67), this protein is thr operon leader peptide.